The primary structure comprises 123 residues: Protein Wnt-7a (123 aa).

Residue Ser-1 is the site of O-palmitoleoyl serine; by PORCN attachment. The tract at residues 33 to 61 is disordered linker; the sequence is VEPVRTHRNKRPVFLKIKKPLSYRKPMVT. A disulfide bridge connects residues Cys-89 and Cys-104. Residues Asn-90 and Asn-96 are each glycosylated (N-linked (GlcNAc...) asparagine).

This sequence belongs to the Wnt family. In terms of assembly, forms a soluble 1:1 complex with AFM; this prevents oligomerization and is required for prolonged biological activity. The complex with AFM may represent the physiological form in body fluids. Interacts with FZD5. Interacts with PORCN. Post-translationally, palmitoleoylation is required for efficient binding to frizzled receptors. Depalmitoleoylation leads to Wnt signaling pathway inhibition.

The protein resides in the secreted. It localises to the extracellular space. It is found in the extracellular matrix. Functionally, ligand for members of the frizzled family of seven transmembrane receptors that functions in the canonical Wnt/beta-catenin signaling pathway. Plays an important role in embryonic development, including dorsal versus ventral patterning during limb development, skeleton development and urogenital tract development. Required for central nervous system (CNS) angiogenesis and blood-brain barrier regulation. The sequence is that of Protein Wnt-7a (WNT-7A) from Alopias vulpinus (Common thresher shark).